Here is a 796-residue protein sequence, read N- to C-terminus: Protein translocase subunit SecA 2 (796 aa).

ATP contacts are provided by residues Q84, 102 to 106, and D496; that span reads GEGKT.

Belongs to the SecA family. In terms of assembly, monomer and homodimer. Part of the essential Sec protein translocation apparatus which comprises SecA, SecYEG and auxiliary proteins SecDF. Other proteins may also be involved.

The protein localises to the cell membrane. It is found in the cytoplasm. It catalyses the reaction ATP + H2O + cellular proteinSide 1 = ADP + phosphate + cellular proteinSide 2.. Functionally, part of the Sec protein translocase complex. Interacts with the SecYEG preprotein conducting channel. Has a central role in coupling the hydrolysis of ATP to the transfer of proteins into and across the cell membrane, serving as an ATP-driven molecular motor driving the stepwise translocation of polypeptide chains across the membrane. The sequence is that of Protein translocase subunit SecA 2 from Staphylococcus epidermidis (strain ATCC 12228 / FDA PCI 1200).